Consider the following 137-residue polypeptide: MKPLKLFCIGLLLCPLVCLLLETAPPPSALLTLEVKEKTGLKSDAMGVFAIRKNTSDINRQVSGLQRPWMTKFKNHLSDFFKSSIPPAAIFALFVTTAIMRAAIVNKRLEEPHRQWTIDQRSSLEMQNMNLIKLFGG.

The signal sequence occupies residues 1–23; it reads MKPLKLFCIGLLLCPLVCLLLET. Over 24-84 the chain is Extracellular; that stretch reads APPPSALLTL…NHLSDFFKSS (61 aa). A helical membrane pass occupies residues 85–105; that stretch reads IPPAAIFALFVTTAIMRAAIV. The Cytoplasmic segment spans residues 106–137; the sequence is NKRLEEPHRQWTIDQRSSLEMQNMNLIKLFGG.

It localises to the cell membrane. This is Small integral membrane protein 9 (Smim9) from Mus musculus (Mouse).